A 118-amino-acid chain; its full sequence is MTSYTFSRELRLLTPAQFKSVFSNPIKASSAEITLLAIPNSEQHPRLGLTVAKRFVKRANQRNRIKRVIRDSFRLHQHDIPDIDIVVLVRNGVMEMENAELHKLIEKLWRKLSRRYNG.

The protein belongs to the RnpA family. Consists of a catalytic RNA component (M1 or rnpB) and a protein subunit.

The enzyme catalyses Endonucleolytic cleavage of RNA, removing 5'-extranucleotides from tRNA precursor.. In terms of biological role, RNaseP catalyzes the removal of the 5'-leader sequence from pre-tRNA to produce the mature 5'-terminus. It can also cleave other RNA substrates such as 4.5S RNA. The protein component plays an auxiliary but essential role in vivo by binding to the 5'-leader sequence and broadening the substrate specificity of the ribozyme. The protein is Ribonuclease P protein component of Shewanella frigidimarina (strain NCIMB 400).